A 524-amino-acid chain; its full sequence is Origin of replication complex subunit 5 (524 aa).

Low complexity predominate over residues 1-19 (MSQPVTPRRTTRSSASASP). The interval 1–56 (MSQPVTPRRTTRSSASASPSPAPASPTSPPKSRPKPSPRRQLLAAAAAPPKEDGSS) is disordered. Over residues 20 to 31 (SPAPASPTSPPK) the composition is skewed to pro residues. The segment covering 39–49 (RRQLLAAAAAP) has biased composition (low complexity). 90-97 (GGAATGKT) lines the ATP pocket.

This sequence belongs to the ORC5 family. In terms of assembly, component of the origin recognition complex (ORC) composed of at least ORC1, ORC2, ORC3, ORC4, ORC5 and ORC6. ORC is regulated in a cell-cycle and development dependent manner. It is sequentially assembled at the exit from anaphase of mitosis and disassembled as cells enter S phase.

It is found in the nucleus. In terms of biological role, component of the origin recognition complex (ORC) that binds origins of replication. DNA-binding is ATP-dependent. The specific DNA sequences that define origins of replication have not been identified yet. ORC is required to assemble the pre-replication complex necessary to initiate DNA replication. The protein is Origin of replication complex subunit 5 of Oryza sativa subsp. indica (Rice).